The chain runs to 542 residues: Chaperonin GroEL (542 aa).

ATP-binding positions include 29–32 (TMGP), K50, 86–90 (DGTTT), G414, 477–479 (NAA), and D493.

It belongs to the chaperonin (HSP60) family. Forms a cylinder of 14 subunits composed of two heptameric rings stacked back-to-back. Interacts with the co-chaperonin GroES.

The protein resides in the cytoplasm. The enzyme catalyses ATP + H2O + a folded polypeptide = ADP + phosphate + an unfolded polypeptide.. Its function is as follows. Together with its co-chaperonin GroES, plays an essential role in assisting protein folding. The GroEL-GroES system forms a nano-cage that allows encapsulation of the non-native substrate proteins and provides a physical environment optimized to promote and accelerate protein folding. The sequence is that of Chaperonin GroEL from Sulfurimonas denitrificans (strain ATCC 33889 / DSM 1251) (Thiomicrospira denitrificans (strain ATCC 33889 / DSM 1251)).